The following is a 1083-amino-acid chain: Solute carrier family 12 member 7 (1083 aa).

Positions 1–51 are disordered; it reads MPTNFTVVPVEARADGAGDEAAERTEEPGSPESADPACPTPGDGNPRENSP. At 1–119 the chain is on the cytoplasmic side; sequence MPTNFTVVPV…RREIKAPRMG (119 aa). Residues 12–27 are compositionally biased toward basic and acidic residues; that stretch reads ARADGAGDEAAERTEE. Phosphoserine occurs at positions 30, 33, 50, and 62. A discontinuously helical membrane pass occupies residues 120 to 142; that stretch reads TFIGVYLPCLQNILGVILFLRLT. Asn-131 and Ile-132 together coordinate K(+). Chloride is bound at residue Val-135. The Extracellular portion of the chain corresponds to 143–149; that stretch reads WIVGAAG. Residues 150–172 form a helical membrane-spanning segment; the sequence is VLESFLIVAMCCTCTMLTAISMS. Topologically, residues 173–196 are cytoplasmic; sequence AIATNGVVPAGGSYYMISRSLGPE. Residues 197–225 form a helical membrane-spanning segment; that stretch reads FGGAVGLCFYLGTTFAGAMYILGTIEIFL. Residues 226-249 are Extracellular-facing; sequence TYISPSAAIFQAETADGEAAALLN. A run of 2 helical transmembrane segments spans residues 250 to 271 and 272 to 300; these read NMRV…VGVK and YVNK…KTAF. The Extracellular portion of the chain corresponds to 301–419; sequence APPDIPVCLL…PYVLTDIMTY (119 aa). Residues Asn-312, Asn-331, and Asn-360 are each glycosylated (N-linked (GlcNAc...) asparagine). Residues 420 to 440 traverse the membrane as a helical segment; it reads FTMLVGIYFPSVTGIMAGSNR. Pro-429 and Thr-432 together coordinate K(+). Position 429 (Pro-429) interacts with chloride. Chloride-binding residues include Gly-433 and Ile-434. At 441-450 the chain is on the cytoplasmic side; sequence SGDLKDAQKS. Residues 451-473 form a helical membrane-spanning segment; it reads IPTGTILAIVTTSFIYLSCIVLF. The Extracellular segment spans residues 474-504; that stretch reads GACIEGVVLRDKFGEALQGNLVIGMLAWPSP. A helical membrane pass occupies residues 505–531; it reads WVIVIGSFFSTCGAGLQSLTGAPRLLQ. The Cytoplasmic segment spans residues 532-554; sequence AIARDGIIPFLQVFGHGKANGEP. A run of 2 helical transmembrane segments spans residues 555 to 573 and 574 to 598; these read TWAL…LIAS and LDSV…ACAV. A chloride-binding site is contributed by Tyr-589. Residues 599–612 lie on the Cytoplasmic side of the membrane; that stretch reads QTLLRTPNWRPRFK. A run of 2 helical transmembrane segments spans residues 613-635 and 636-651; these read FYHW…ICSW and YYAL…IYKY. At 652-1083 the chain is on the cytoplasmic side; it reads IEYRGAEKEW…GGREVITIYS (432 aa). Residues 664 to 680 are scissor helix; sequence GIRGLSLNAARYALLRV. Thr-973 and Thr-980 each carry phosphothreonine.

It belongs to the SLC12A transporter family. K/Cl co-transporter subfamily. Homodimer; adopts a domain-swap conformation at the scissor helices connecting the transmembrane domain and C-terminal domain. Heterodimer with K-Cl cotransporter SLC12A5. Widely expressed with highest levels in kidney, liver and pancreas. Expressed in choroid plexus and suprachiasmatic nucleus.

It localises to the cell membrane. It carries out the reaction K(+)(in) + chloride(in) = K(+)(out) + chloride(out). Activated by N-ethylmaleimide (NEM). Inhibited by furosemide, DIDS and bumetanide. The inhibition is much stronger in the presence of 50 mM K(+) in the uptake medium. Inhibited by DIOA. Inhibited by WNK3. Its function is as follows. Mediates electroneutral potassium-chloride cotransport when activated by cell swelling. May mediate K(+) uptake into Deiters' cells in the cochlea and contribute to K(+) recycling in the inner ear. Important for the survival of cochlear outer and inner hair cells and the maintenance of the organ of Corti. May be required for basolateral Cl(-) extrusion in the kidney and contribute to renal acidification. This is Solute carrier family 12 member 7 from Rattus norvegicus (Rat).